The sequence spans 425 residues: tRNA(Ile)-lysidine synthase (425 aa).

ATP is bound at residue 37–42 (SGGKDS).

It belongs to the tRNA(Ile)-lysidine synthase family.

It localises to the cytoplasm. It catalyses the reaction cytidine(34) in tRNA(Ile2) + L-lysine + ATP = lysidine(34) in tRNA(Ile2) + AMP + diphosphate + H(+). Ligates lysine onto the cytidine present at position 34 of the AUA codon-specific tRNA(Ile) that contains the anticodon CAU, in an ATP-dependent manner. Cytidine is converted to lysidine, thus changing the amino acid specificity of the tRNA from methionine to isoleucine. This Leptospira borgpetersenii serovar Hardjo-bovis (strain JB197) protein is tRNA(Ile)-lysidine synthase.